We begin with the raw amino-acid sequence, 270 residues long: Carboxy-terminal domain RNA polymerase II polypeptide A small phosphatase 2 (270 aa).

S5 carries the post-translational modification Phosphoserine. The FCP1 homology domain occupies 96–254 (QDQGRICVVI…LNLIPVFEEL (159 aa)). The 4-aspartylphosphate intermediate role is filled by D106. 3 residues coordinate Mg(2+): D106, D108, and N217. D108 (proton donor) is an active-site residue.

As to quaternary structure, monomer. Interacts with REST. Mg(2+) serves as cofactor. In terms of tissue distribution, expression is restricted to non-neuronal tissues.

The protein localises to the nucleus. It carries out the reaction O-phospho-L-seryl-[protein] + H2O = L-seryl-[protein] + phosphate. The enzyme catalyses O-phospho-L-threonyl-[protein] + H2O = L-threonyl-[protein] + phosphate. Functionally, preferentially catalyzes the dephosphorylation of 'Ser-5' within the tandem 7 residue repeats in the C-terminal domain (CTD) of the largest RNA polymerase II subunit POLR2A. Negatively regulates RNA polymerase II transcription, possibly by controlling the transition from initiation/capping to processive transcript elongation. Recruited by REST to neuronal genes that contain RE-1 elements, leading to neuronal gene silencing in non-neuronal cells. In Mus musculus (Mouse), this protein is Carboxy-terminal domain RNA polymerase II polypeptide A small phosphatase 2 (Ctdsp2).